Reading from the N-terminus, the 348-residue chain is Flagellar P-ring protein (348 aa).

Positions 1 to 16 (MRIFLLCLALSLSVFA) are cleaved as a signal peptide.

This sequence belongs to the FlgI family. As to quaternary structure, the basal body constitutes a major portion of the flagellar organelle and consists of four rings (L,P,S, and M) mounted on a central rod.

It localises to the periplasm. Its subcellular location is the bacterial flagellum basal body. In terms of biological role, assembles around the rod to form the L-ring and probably protects the motor/basal body from shearing forces during rotation. This chain is Flagellar P-ring protein, found in Campylobacter lari (strain RM2100 / D67 / ATCC BAA-1060).